The primary structure comprises 344 residues: L-rhamnose-proton symporter (344 aa).

Helical transmembrane passes span 4-24 (AITM…CFYA), 38-58 (WSVG…ATLL), 72-92 (TLLP…NYGL), 101-121 (MGIG…TPII), 131-151 (TQGG…VGIV), 175-195 (LLLA…MNAA), 214-234 (LPSY…FCFI), 259-279 (LLLS…YAWG), 290-310 (MSWM…GLVL), and 323-343 (VLSL…LGMA).

This sequence belongs to the L-rhamnose transporter (TC 2.A.7.6) family.

Its subcellular location is the cell inner membrane. It carries out the reaction L-rhamnopyranose(in) + H(+)(in) = L-rhamnopyranose(out) + H(+)(out). Uptake of L-rhamnose across the cytoplasmic membrane with the concomitant transport of protons into the cell (symport system). The protein is L-rhamnose-proton symporter of Klebsiella pneumoniae (strain 342).